Reading from the N-terminus, the 268-residue chain is Putative carbamate hydrolase RutD (268 aa).

The AB hydrolase-1 domain maps to 24–243 (VILSAGLGGS…NATLDIAPWG (220 aa)).

The protein belongs to the AB hydrolase superfamily. Hydrolase RutD family.

The catalysed reaction is carbamate + 2 H(+) = NH4(+) + CO2. In terms of biological role, involved in pyrimidine catabolism. May facilitate the hydrolysis of carbamate, a reaction that can also occur spontaneously. In Caulobacter sp. (strain K31), this protein is Putative carbamate hydrolase RutD.